Here is a 156-residue protein sequence, read N- to C-terminus: Snaclec jerdonibitin subunit alpha (156 aa).

The signal sequence occupies residues methionine 1–alanine 23. Disulfide bonds link cysteine 25-cysteine 36, cysteine 53-cysteine 150, and cysteine 125-cysteine 142. Positions phenylalanine 32–lysine 151 constitute a C-type lectin domain.

Belongs to the snaclec family. Heterodimer of subunits alpha and beta; disulfide-linked. Expressed by the venom gland.

The protein resides in the secreted. Snaclec that dose-dependently inhibits platelet aggregation induced by ristocetin or low-dose thrombin, but not by high-dose thrombin. Binds to GPIbalpha (GP1BA). In vivo, also dose-dependently induces thrombocytopenia of mice and platelet counts remains at very low level even after 18 hours intravenous injection. The polypeptide is Snaclec jerdonibitin subunit alpha (Protobothrops jerdonii (Jerdon's pitviper)).